A 166-amino-acid polypeptide reads, in one-letter code: uncharacterized protein (166 aa).

The segment at 25-116 is disordered; sequence PEEPPLWVPP…QGADEVHSQH (92 aa). Residue Ser-105 is modified to Phosphoserine.

This is an uncharacterized protein from Rattus norvegicus (Rat).